Here is a 162-residue protein sequence, read N- to C-terminus: Small ribosomal subunit protein uS7m (162 aa).

The protein belongs to the universal ribosomal protein uS7 family. In terms of assembly, part of the small ribosomal subunit.

Its subcellular location is the mitochondrion. Functionally, one of the primary rRNA binding proteins, it binds directly to 16S-like rRNA where it nucleates assembly of the head domain of the small subunit. In Dictyostelium citrinum (Slime mold), this protein is Small ribosomal subunit protein uS7m (mrps7).